A 193-amino-acid chain; its full sequence is UPF0215 protein PH0071 (193 aa).

It belongs to the UPF0215 family.

This chain is UPF0215 protein PH0071, found in Pyrococcus horikoshii (strain ATCC 700860 / DSM 12428 / JCM 9974 / NBRC 100139 / OT-3).